The following is a 285-amino-acid chain: Ribonuclease Z (285 aa).

Zn(2+) contacts are provided by histidine 61, histidine 63, aspartate 65, histidine 66, histidine 152, aspartate 175, and histidine 239. Aspartate 65 functions as the Proton acceptor in the catalytic mechanism.

Belongs to the RNase Z family. In terms of assembly, homodimer. It depends on Zn(2+) as a cofactor.

The enzyme catalyses Endonucleolytic cleavage of RNA, removing extra 3' nucleotides from tRNA precursor, generating 3' termini of tRNAs. A 3'-hydroxy group is left at the tRNA terminus and a 5'-phosphoryl group is left at the trailer molecule.. Its function is as follows. Zinc phosphodiesterase, which displays some tRNA 3'-processing endonuclease activity. Probably involved in tRNA maturation, by removing a 3'-trailer from precursor tRNA. The protein is Ribonuclease Z of Mycobacterium sp. (strain JLS).